A 263-amino-acid chain; its full sequence is Shikimate dehydrogenase (NADP(+)) (263 aa).

Residues 14–16 and threonine 60 each bind shikimate; that span reads SLS. Lysine 64 acts as the Proton acceptor in catalysis. Asparagine 85 and aspartate 100 together coordinate shikimate. NADP(+) is bound by residues 123–127, 146–151, and leucine 205; these read GAGGA and NRTPQR. Tyrosine 207 is a shikimate binding site. Residue glycine 228 participates in NADP(+) binding.

It belongs to the shikimate dehydrogenase family. Homodimer.

The enzyme catalyses shikimate + NADP(+) = 3-dehydroshikimate + NADPH + H(+). It participates in metabolic intermediate biosynthesis; chorismate biosynthesis; chorismate from D-erythrose 4-phosphate and phosphoenolpyruvate: step 4/7. Its function is as follows. Involved in the biosynthesis of the chorismate, which leads to the biosynthesis of aromatic amino acids. Catalyzes the reversible NADPH linked reduction of 3-dehydroshikimate (DHSA) to yield shikimate (SA). The protein is Shikimate dehydrogenase (NADP(+)) of Thermus thermophilus (strain ATCC BAA-163 / DSM 7039 / HB27).